Reading from the N-terminus, the 337-residue chain is 4-hydroxy-3-methylbut-2-enyl diphosphate reductase (337 aa).

Residue C25 participates in [4Fe-4S] cluster binding. Residues H54 and H87 each contribute to the (2E)-4-hydroxy-3-methylbut-2-enyl diphosphate site. The dimethylallyl diphosphate site is built by H54 and H87. Isopentenyl diphosphate-binding residues include H54 and H87. C109 provides a ligand contact to [4Fe-4S] cluster. Residue H137 coordinates (2E)-4-hydroxy-3-methylbut-2-enyl diphosphate. H137 is a dimethylallyl diphosphate binding site. H137 provides a ligand contact to isopentenyl diphosphate. Residue E139 is the Proton donor of the active site. T177 serves as a coordination point for (2E)-4-hydroxy-3-methylbut-2-enyl diphosphate. Position 207 (C207) interacts with [4Fe-4S] cluster. S235, S236, N237, and S280 together coordinate (2E)-4-hydroxy-3-methylbut-2-enyl diphosphate. The dimethylallyl diphosphate site is built by S235, S236, N237, and S280. Positions 235, 236, 237, and 280 each coordinate isopentenyl diphosphate.

It belongs to the IspH family. [4Fe-4S] cluster serves as cofactor.

The enzyme catalyses isopentenyl diphosphate + 2 oxidized [2Fe-2S]-[ferredoxin] + H2O = (2E)-4-hydroxy-3-methylbut-2-enyl diphosphate + 2 reduced [2Fe-2S]-[ferredoxin] + 2 H(+). It carries out the reaction dimethylallyl diphosphate + 2 oxidized [2Fe-2S]-[ferredoxin] + H2O = (2E)-4-hydroxy-3-methylbut-2-enyl diphosphate + 2 reduced [2Fe-2S]-[ferredoxin] + 2 H(+). It participates in isoprenoid biosynthesis; dimethylallyl diphosphate biosynthesis; dimethylallyl diphosphate from (2E)-4-hydroxy-3-methylbutenyl diphosphate: step 1/1. Its pathway is isoprenoid biosynthesis; isopentenyl diphosphate biosynthesis via DXP pathway; isopentenyl diphosphate from 1-deoxy-D-xylulose 5-phosphate: step 6/6. Its function is as follows. Catalyzes the conversion of 1-hydroxy-2-methyl-2-(E)-butenyl 4-diphosphate (HMBPP) into a mixture of isopentenyl diphosphate (IPP) and dimethylallyl diphosphate (DMAPP). Acts in the terminal step of the DOXP/MEP pathway for isoprenoid precursor biosynthesis. The polypeptide is 4-hydroxy-3-methylbut-2-enyl diphosphate reductase (Leifsonia xyli subsp. xyli (strain CTCB07)).